The primary structure comprises 155 residues: S-ribosylhomocysteine lyase (155 aa).

Fe cation-binding residues include histidine 58, histidine 62, and cysteine 125.

This sequence belongs to the LuxS family. In terms of assembly, homodimer. Requires Fe cation as cofactor.

It catalyses the reaction S-(5-deoxy-D-ribos-5-yl)-L-homocysteine = (S)-4,5-dihydroxypentane-2,3-dione + L-homocysteine. Its function is as follows. Involved in the synthesis of autoinducer 2 (AI-2) which is secreted by bacteria and is used to communicate both the cell density and the metabolic potential of the environment. The regulation of gene expression in response to changes in cell density is called quorum sensing. Catalyzes the transformation of S-ribosylhomocysteine (RHC) to homocysteine (HC) and 4,5-dihydroxy-2,3-pentadione (DPD). The chain is S-ribosylhomocysteine lyase from Helicobacter pylori (strain P12).